Here is a 477-residue protein sequence, read N- to C-terminus: Cytoplasmic 60S subunit biogenesis factor ZNF622 (477 aa).

A2 carries the N-acetylalanine modification. 2 U1-type zinc fingers span residues 4 to 28 (YTCI…TDWH) and 67 to 91 (TYCT…SRRH). The interval 135 to 212 (AIKAQPSMSP…EDLDGDDWED (78 aa)) is disordered. Residues 167–178 (GTHDRDPSEKPP) show a composition bias toward basic and acidic residues. The segment covering 196-212 (EDSEEEEEDLDGDDWED) has biased composition (acidic residues). S276 is modified (phosphoserine).

Belongs to the REI1 family. As to quaternary structure, homo- and heterodimer. Associates with pre-60S ribosomal particles. Interacts with MELK and MYBL2. Interacts with DNAJC21. Post-translationally, phosphorylated by MELK. The phosphorylation may redirect the protein to the nucleus. Ubiquitinated by HECTD1, leading to its degradation. Expressed in lung, kidney, spleen, liver and brain with lowest expression in kidney.

Its subcellular location is the cytoplasm. It localises to the nucleus. In terms of biological role, pre-60S-associated cytoplasmic factor involved in the cytoplasmic maturation of the 60S subunit. This is Cytoplasmic 60S subunit biogenesis factor ZNF622 from Homo sapiens (Human).